The primary structure comprises 155 residues: Regulatory protein RecX (155 aa).

The protein belongs to the RecX family.

It is found in the cytoplasm. Modulates RecA activity. This Vibrio parahaemolyticus serotype O3:K6 (strain RIMD 2210633) protein is Regulatory protein RecX.